Here is a 725-residue protein sequence, read N- to C-terminus: Ribonuclease R (725 aa).

In terms of domain architecture, RNB spans 236-559 (RKDLRDKLII…QLHRLIKQMV (324 aa)). The region spanning 611–689 (GKSLKAQIVS…NLGKVDVVLE (79 aa)) is the S1 motif domain.

The protein belongs to the RNR ribonuclease family. RNase R subfamily.

It is found in the cytoplasm. The enzyme catalyses Exonucleolytic cleavage in the 3'- to 5'-direction to yield nucleoside 5'-phosphates.. In terms of biological role, 3'-5' exoribonuclease that releases 5'-nucleoside monophosphates and is involved in maturation of structured RNAs. This chain is Ribonuclease R, found in Mycoplasmopsis pulmonis (strain UAB CTIP) (Mycoplasma pulmonis).